A 104-amino-acid polypeptide reads, in one-letter code: Putative ankyrin repeat protein L677 (104 aa).

ANK repeat units lie at residues 16-43 (FNKSSLEIACIENDIGTVKKIINLNPNL), 44-73 (DISHCLNLAIESKNYQIVKFLLKKNISNSV), and 75-102 (LEAYDCACINGKISIMELLIQYLNNKSI).

The sequence is that of Putative ankyrin repeat protein L677 from Acanthamoeba polyphaga (Amoeba).